Consider the following 214-residue polypeptide: Threonylcarbamoyl-AMP synthase (214 aa).

The YrdC-like domain occupies 9 to 214 (TDSVIQAAHW…GDALTGQIIR (206 aa)).

This sequence belongs to the SUA5 family. TsaC subfamily.

The protein localises to the cytoplasm. The catalysed reaction is L-threonine + hydrogencarbonate + ATP = L-threonylcarbamoyladenylate + diphosphate + H2O. Its function is as follows. Required for the formation of a threonylcarbamoyl group on adenosine at position 37 (t(6)A37) in tRNAs that read codons beginning with adenine. Catalyzes the conversion of L-threonine, HCO(3)(-)/CO(2) and ATP to give threonylcarbamoyl-AMP (TC-AMP) as the acyladenylate intermediate, with the release of diphosphate. In Psychrobacter arcticus (strain DSM 17307 / VKM B-2377 / 273-4), this protein is Threonylcarbamoyl-AMP synthase.